The chain runs to 600 residues: Alanine--tRNA ligase (600 aa).

Positions 463, 467, 565, and 569 each coordinate Zn(2+).

It belongs to the class-II aminoacyl-tRNA synthetase family. It depends on Zn(2+) as a cofactor.

Its subcellular location is the cytoplasm. It catalyses the reaction tRNA(Ala) + L-alanine + ATP = L-alanyl-tRNA(Ala) + AMP + diphosphate. Its function is as follows. Catalyzes the attachment of alanine to tRNA(Ala) in a two-step reaction: alanine is first activated by ATP to form Ala-AMP and then transferred to the acceptor end of tRNA(Ala). Also edits incorrectly charged Ser-tRNA(Ala) and Gly-tRNA(Ala) via its editing domain. This is Alanine--tRNA ligase (alaS) from Treponema denticola (strain ATCC 35405 / DSM 14222 / CIP 103919 / JCM 8153 / KCTC 15104).